Reading from the N-terminus, the 551-residue chain is Tetrachloroethene reductive dehalogenase (551 aa).

The tat-type signal signal peptide spans 1–39 (MGEINRRNFLKVSILGAAAAAVASASAVKGMVSPLVADA). The region spanning 411 to 440 (PRKFGVREFCRLCKKCADACPAQAISHEKD) is the 4Fe-4S ferredoxin-type 1 domain. Residues C420, C423, C426, C430, C467, C478, C481, and C485 each coordinate [4Fe-4S] cluster. The 4Fe-4S ferredoxin-type 2 domain maps to 478 to 496 (CSNCVAVCSWNKVETWNHD).

The protein belongs to the PceA family. Requires [4Fe-4S] cluster as cofactor. Corrinoid is required as a cofactor. In terms of processing, predicted to be exported by the Tat system. The position of the signal peptide cleavage has not been experimentally proven.

The protein resides in the cell membrane. The catalysed reaction is trichloroethene + chloride + A + H(+) = tetrachloroethene + AH2. The enzyme catalyses trichloroethene + AH2 = (Z)-1,2-dichloroethene + chloride + A + H(+). Functionally, catalyzes the reductive dechlorination of tetrachloroethene (PCE) to trichloroethene (TCE) and of trichloroethene to cis-1,2-dichloroethene (DCE). The protein is Tetrachloroethene reductive dehalogenase of Desulfitobacterium hafniense (Desulfitobacterium frappieri).